The following is a 198-amino-acid chain: Sporulation-specific protein 16 (198 aa).

Necessary for efficient spore formation. This is Sporulation-specific protein 16 (SPO16) from Saccharomyces cerevisiae (strain ATCC 204508 / S288c) (Baker's yeast).